The following is a 620-amino-acid chain: Phosphopentomutase (620 aa).

Positions 71 and 173 each coordinate alpha-D-glucose 1,6-bisphosphate. The active-site Phosphoserine intermediate is the S173. Mg(2+) contacts are provided by S173, D330, D332, and D334. A Phosphoserine modification is found at S173. Residues D334, R335, T408, E432, and K446 each coordinate alpha-D-glucose 1,6-bisphosphate.

The protein belongs to the phosphohexose mutase family. Monomer. The cofactor is Mg(2+). As to expression, highly expressed in lung, spleen and thymus. Expressed at lower levels in liver, brain, kidney, skeletal muscle, testis and heart.

The protein localises to the cytoplasm. Its subcellular location is the cytosol. It catalyses the reaction alpha-D-ribose 1-phosphate = D-ribose 5-phosphate. The enzyme catalyses 2-deoxy-alpha-D-ribose 1-phosphate = 2-deoxy-D-ribose 5-phosphate. It carries out the reaction alpha-D-glucose 1-phosphate = alpha-D-glucose 6-phosphate. The catalysed reaction is O-phospho-L-seryl-[protein] + alpha-D-glucose 1-phosphate = alpha-D-glucose 1,6-bisphosphate + L-seryl-[protein]. It catalyses the reaction alpha-D-glucose 1,6-bisphosphate + L-seryl-[protein] = O-phospho-L-seryl-[protein] + alpha-D-glucose 6-phosphate. Catalyzes the conversion of the nucleoside breakdown products ribose-1-phosphate and deoxyribose-1-phosphate to the corresponding 5-phosphopentoses. Catalyzes the reversible isomerization of alpha-D-glucose 1-phosphate to alpha-D-glucose 6-phosphate but with a lower catalytic efficiency. The mechanism proceeds via the intermediate compound alpha-D-glucose 1,6-bisphosphate. In vitro, also has a low glucose 1,6-bisphosphate synthase activity which is most probably not physiologically relevant. The sequence is that of Phosphopentomutase from Mus musculus (Mouse).